A 178-amino-acid chain; its full sequence is dCTP deaminase, dUMP-forming (178 aa).

Residues 96–101 (RSSLGR), D113, 121–123 (TLE), Q142, Y156, and Q163 contribute to the dCTP site. E123 functions as the Proton donor/acceptor in the catalytic mechanism.

It belongs to the dCTP deaminase family. In terms of assembly, homotrimer.

The enzyme catalyses dCTP + 2 H2O = dUMP + NH4(+) + diphosphate. It participates in pyrimidine metabolism; dUMP biosynthesis; dUMP from dCTP: step 1/1. Functionally, bifunctional enzyme that catalyzes both the deamination of dCTP to dUTP and the hydrolysis of dUTP to dUMP without releasing the toxic dUTP intermediate. The chain is dCTP deaminase, dUMP-forming from Acetivibrio thermocellus (strain ATCC 27405 / DSM 1237 / JCM 9322 / NBRC 103400 / NCIMB 10682 / NRRL B-4536 / VPI 7372) (Clostridium thermocellum).